The primary structure comprises 243 residues: MKACRCITILTGAGISAESGISTFRDSNGLWCNHHVEDVASPDAFIRNPALVQLFYNERRRNLLLSSVKPNKAHTALAKLEEELSGKGKVFIVTQNVDNLHERAGSKNVLHMHGELLKARCTATGNVFEWQKDIVGDVDRCPDCGFLGTLRPHIVWFGEMPLCMDEIESILSTTDLFVAIGTSGNVYPAAGFVKRAQFYGATTLELNLQEGSNSTLFQESIYGKASSIVPTWVDQVLKESLKK.

One can recognise a Deacetylase sirtuin-type domain in the interval 1-239; that stretch reads MKACRCITIL…PTWVDQVLKE (239 aa). 12–31 serves as a coordination point for NAD(+); it reads GAGISAESGISTFRDSNGLW. Y56 and R59 together coordinate substrate. 95–98 lines the NAD(+) pocket; it reads QNVD. Residue H113 is the Proton acceptor of the active site. C121 and C141 together coordinate Zn(2+). NAD(+) is bound by residues 181–183 and A225; that span reads GTS.

The protein belongs to the sirtuin family. Class III subfamily. Zn(2+) is required as a cofactor.

Its subcellular location is the mitochondrion. The enzyme catalyses N(6)-malonyl-L-lysyl-[protein] + NAD(+) + H2O = 2''-O-malonyl-ADP-D-ribose + nicotinamide + L-lysyl-[protein]. It carries out the reaction N(6)-succinyl-L-lysyl-[protein] + NAD(+) + H2O = 2''-O-succinyl-ADP-D-ribose + nicotinamide + L-lysyl-[protein]. It catalyses the reaction N(6)-glutaryl-L-lysyl-[protein] + NAD(+) + H2O = 2''-O-glutaryl-ADP-D-ribose + nicotinamide + L-lysyl-[protein]. Functionally, NAD-dependent lysine demalonylase, desuccinylase and deglutarylase that specifically removes malonyl, succinyl and glutaryl groups on target proteins. Has weak NAD-dependent protein deacetylase activity; however this activity may not be physiologically relevant in vivo. The sequence is that of NAD-dependent protein deacylase SIR2rp3 (SIR2rp3) from Leishmania major.